Reading from the N-terminus, the 455-residue chain is DNA repair protein RadA (455 aa).

Residues 12 to 29 (CSECGSYSPKWLGQCPGC) form a C4-type zinc finger. Residue 95 to 102 (GEPGIGKS) participates in ATP binding. The RadA KNRFG motif signature appears at 252-256 (KNRFG). The interval 351-455 (DVFLSIAGGL…TIKDAVRLLQ (105 aa)) is lon-protease-like.

This sequence belongs to the RecA family. RadA subfamily.

Its function is as follows. DNA-dependent ATPase involved in processing of recombination intermediates, plays a role in repairing DNA breaks. Stimulates the branch migration of RecA-mediated strand transfer reactions, allowing the 3' invading strand to extend heteroduplex DNA faster. Binds ssDNA in the presence of ADP but not other nucleotides, has ATPase activity that is stimulated by ssDNA and various branched DNA structures, but inhibited by SSB. Does not have RecA's homology-searching function. In Chlamydia muridarum (strain MoPn / Nigg), this protein is DNA repair protein RadA.